The chain runs to 166 residues: Putative protein PTGES3L (166 aa).

Residues 46-154 enclose the CS domain; sequence RQHARTLWYD…RPPPAMDDLD (109 aa). Positions 142-166 are disordered; it reads STKRPPPAMDDLDDDSDSADDATSN. Residues 151-166 are compositionally biased toward acidic residues; sequence DDLDDDSDSADDATSN.

Belongs to the p23/wos2 family.

This chain is Putative protein PTGES3L, found in Homo sapiens (Human).